We begin with the raw amino-acid sequence, 499 residues long: U4/U6 small nuclear ribonucleoprotein Prp31 (499 aa).

The segment at 1–37 (MSLADELLADLEEAAEEEEGGSYGEEEEEPAIEDVQE) is disordered. A compositionally biased stretch (acidic residues) spans 7-37 (LLADLEEAAEEEEGGSYGEEEEEPAIEDVQE). Coiled-coil stretches lie at residues 85–120 (EAAP…KYSK) and 181–215 (EEEL…MSFI). In terms of domain architecture, Nop spans 215–333 (IAPNLSIIIG…IERKFDKWQE (119 aa)). The segment at 334–357 (PPPVKQVKPLPAPLDGQRKKRGGR) is disordered. A Nuclear localization signal (NLS) motif is present at residues 351-364 (RKKRGGRRYRKMKE). S379, S395, and S432 each carry phosphoserine. K438 carries the post-translational modification N6-acetyllysine. Phosphoserine is present on S439. Position 440 is a phosphothreonine (T440). S450 is modified (phosphoserine). T455 is modified (phosphothreonine). Residues K471 and K478 each participate in a glycyl lysine isopeptide (Lys-Gly) (interchain with G-Cter in SUMO2) cross-link.

Belongs to the PRP31 family. Identified in the spliceosome B complex. Component of the U4/U6-U5 tri-snRNP complex composed of the U4, U6 and U5 snRNAs and at least PRPF3, PRPF4, PRPF6, PRPF8, PRPF31, SNRNP200, TXNL4A, SNRNP40, DDX23, CD2BP2, PPIH, SNU13, EFTUD2, SART1 and USP39. Interacts with a complex formed by SNU13 and U4 snRNA, but not with SNU13 or U4 snRNA alone. The complex formed by SNU13 and PRPF31 also binds U4atac snRNA, a characteristic component of specific, less abundant spliceosomal complexes. Interacts with PRPF6/U5 snRNP-associated 102 kDa protein. Component of some MLL1/MLL complex, at least composed of the core components KMT2A/MLL1, ASH2L, HCFC1/HCF1, WDR5 and RBBP5, as well as the facultative components BACC1, CHD8, E2F6, HSP70, INO80C, KANSL1, LAS1L, MAX, MCRS1, MGA, KAT8/MOF, PELP1, PHF20, PRP31, RING2, RUVB1/TIP49A, RUVB2/TIP49B, SENP3, TAF1, TAF4, TAF6, TAF7, TAF9 and TEX10. Interacts (via its NLS) with CTNNBL1. Interacts with USH1G. Phosphorylated by PRP4K during spliceosome assembly. As to expression, ubiquitously expressed.

It localises to the nucleus. It is found in the nucleus speckle. The protein resides in the cajal body. Its function is as follows. Involved in pre-mRNA splicing as component of the spliceosome. Required for the assembly of the U4/U5/U6 tri-snRNP complex, one of the building blocks of the spliceosome. The sequence is that of U4/U6 small nuclear ribonucleoprotein Prp31 from Homo sapiens (Human).